We begin with the raw amino-acid sequence, 388 residues long: Flap endonuclease 1 (388 aa).

The interval 1-104 (MGILGLSKLI…GELAKRAERR (104 aa)) is N-domain. D34 is a Mg(2+) binding site. 2 residues coordinate DNA: R47 and R70. Mg(2+) contacts are provided by D86, E158, E160, D179, and D181. The segment at 122–253 (EIEKFNRRLV…KRAIELIKTY (132 aa)) is I-domain. E158 serves as a coordination point for DNA. Residues G231 and D233 each coordinate DNA. D233 contacts Mg(2+). The interval 336-344 (TQVRLDSFF) is interaction with PCNA. The segment at 351 to 388 (PNATAAAKRKAEEIKKSANNKKAKTSGGSGAARGRRPK) is disordered.

Belongs to the XPG/RAD2 endonuclease family. FEN1 subfamily. Interacts with PCNA. Three molecules of FEN1 bind to one PCNA trimer with each molecule binding to one PCNA monomer. PCNA stimulates the nuclease activity without altering cleavage specificity. It depends on Mg(2+) as a cofactor. Post-translationally, phosphorylated. Phosphorylation upon DNA damage induces relocalization to the nuclear plasma.

Its subcellular location is the nucleus. It is found in the nucleolus. It localises to the nucleoplasm. The protein resides in the mitochondrion. Structure-specific nuclease with 5'-flap endonuclease and 5'-3' exonuclease activities involved in DNA replication and repair. During DNA replication, cleaves the 5'-overhanging flap structure that is generated by displacement synthesis when DNA polymerase encounters the 5'-end of a downstream Okazaki fragment. It enters the flap from the 5'-end and then tracks to cleave the flap base, leaving a nick for ligation. Also involved in the long patch base excision repair (LP-BER) pathway, by cleaving within the apurinic/apyrimidinic (AP) site-terminated flap. Acts as a genome stabilization factor that prevents flaps from equilibrating into structures that lead to duplications and deletions. Also possesses 5'-3' exonuclease activity on nicked or gapped double-stranded DNA, and exhibits RNase H activity. Also involved in replication and repair of rDNA and in repairing mitochondrial DNA. This chain is Flap endonuclease 1, found in Drosophila mojavensis (Fruit fly).